The sequence spans 475 residues: Tryptophan synthase beta chain 2, chloroplastic (475 aa).

Residues 1–21 show a composition bias toward polar residues; it reads MATASTAATFRPSSVSASSEL. The disordered stretch occupies residues 1-44; sequence MATASTAATFRPSSVSASSELTHLRSPSKLPKFTPLPSARSRSS. Residues 1–51 constitute a chloroplast transit peptide; the sequence is MATASTAATFRPSSVSASSELTHLRSPSKLPKFTPLPSARSRSSSSFSVSC. Threonine 52 carries the N-acetylthreonine modification. Lysine 170 bears the N6-(pyridoxal phosphate)lysine mark.

Belongs to the TrpB family. As to quaternary structure, tetramer of two alpha and two beta chains. Pyridoxal 5'-phosphate serves as cofactor.

It is found in the plastid. The protein resides in the chloroplast. It carries out the reaction (1S,2R)-1-C-(indol-3-yl)glycerol 3-phosphate + L-serine = D-glyceraldehyde 3-phosphate + L-tryptophan + H2O. It functions in the pathway amino-acid biosynthesis; L-tryptophan biosynthesis; L-tryptophan from chorismate: step 5/5. Its function is as follows. The beta subunit is responsible for the synthesis of L-tryptophan from indole and L-serine. The protein is Tryptophan synthase beta chain 2, chloroplastic (TSB2) of Arabidopsis thaliana (Mouse-ear cress).